Here is a 250-residue protein sequence, read N- to C-terminus: UPF0259 membrane protein bbp_256 (250 aa).

6 consecutive transmembrane segments (helical) span residues 21–41, 86–106, 125–145, 146–166, 188–208, and 216–236; these read PIIV…DSII, FSLL…IQMT, FFKL…GFLL, YFIP…ILLI, IIVP…LIIS, and FLAY…LIIY.

This sequence belongs to the UPF0259 family.

The protein localises to the cell membrane. The sequence is that of UPF0259 membrane protein bbp_256 from Buchnera aphidicola subsp. Baizongia pistaciae (strain Bp).